A 136-amino-acid chain; its full sequence is ATP synthase F(0) complex subunit C1, mitochondrial (136 aa).

The N-terminal 61 residues, methionine 1–arginine 61, are a transit peptide targeting the mitochondrion. A helical membrane pass occupies residues valine 77–tyrosine 97. Position 104 is an N6,N6,N6-trimethyllysine (lysine 104). A helical transmembrane segment spans residues isoleucine 112–isoleucine 132.

Belongs to the ATPase C chain family. Homooctamer; the c-ring consists of eight c subunits forming a circle, and each subunit adopts a hairpin shape. Component of the ATP synthase complex composed at least of ATP5F1A/subunit alpha, ATP5F1B/subunit beta, ATP5MC1/subunit c (homooctomer), MT-ATP6/subunit a, MT-ATP8/subunit 8, ATP5ME/subunit e, ATP5MF/subunit f, ATP5MG/subunit g, ATP5MK/subunit k, ATP5MJ/subunit j, ATP5F1C/subunit gamma, ATP5F1D/subunit delta, ATP5F1E/subunit epsilon, ATP5PF/subunit F6, ATP5PB/subunit b, ATP5PD/subunit d, ATP5PO/subunit OSCP. ATP synthase complex consists of a soluble F(1) head domain (subunits alpha(3) and beta(3)) - the catalytic core - and a membrane F(0) domain - the membrane proton channel (subunits c, a, 8, e, f, g, k and j). These two domains are linked by a central stalk (subunits gamma, delta, and epsilon) rotating inside the F1 region and a stationary peripheral stalk (subunits F6, b, d, and OSCP). Interacts with TMEM70 (homooligomer form); this interaction facilitates the oligomer formation of subunit c/ATP5MC1 (c-ring) and the c-ring membrane insertion and also protects ATP5MC1 against intramitochondrial proteolysis. Trimethylated by ATPSCKMT at Lys-104. Methylation is required for proper incorporation of the C subunit into the ATP synthase complex and mitochondrial respiration.

It localises to the mitochondrion membrane. The catalysed reaction is H(+)(in) = H(+)(out). Subunit c, of the mitochondrial membrane ATP synthase complex (F(1)F(0) ATP synthase or Complex V) that produces ATP from ADP in the presence of a proton gradient across the membrane which is generated by electron transport complexes of the respiratory chain. ATP synthase complex consist of a soluble F(1) head domain - the catalytic core - and a membrane F(1) domain - the membrane proton channel. These two domains are linked by a central stalk rotating inside the F(1) region and a stationary peripheral stalk. During catalysis, ATP synthesis in the catalytic domain of F(1) is coupled via a rotary mechanism of the central stalk subunits to proton translocation. With the subunit a (MT-ATP6), forms the proton-conducting channel in the F(0) domain, that contains two crucial half-channels (inlet and outlet) that facilitate proton movement from the mitochondrial intermembrane space (IMS) into the matrix. Protons are taken up via the inlet half-channel and released through the outlet half-channel, following a Grotthuss mechanism. This Sus scrofa (Pig) protein is ATP synthase F(0) complex subunit C1, mitochondrial.